Reading from the N-terminus, the 353-residue chain is GTPase Obg (353 aa).

In terms of domain architecture, Obg spans methionine 1 to isoleucine 159. One can recognise an OBG-type G domain in the interval alanine 160–glycine 327. Residues glycine 166–serine 173, phenylalanine 191–histidine 195, aspartate 212–glycine 215, asparagine 279–aspartate 282, and serine 308–valine 310 contribute to the GTP site. Residues serine 173 and threonine 193 each coordinate Mg(2+).

Belongs to the TRAFAC class OBG-HflX-like GTPase superfamily. OBG GTPase family. Monomer. Requires Mg(2+) as cofactor.

The protein localises to the cytoplasm. Functionally, an essential GTPase which binds GTP, GDP and possibly (p)ppGpp with moderate affinity, with high nucleotide exchange rates and a fairly low GTP hydrolysis rate. Plays a role in control of the cell cycle, stress response, ribosome biogenesis and in those bacteria that undergo differentiation, in morphogenesis control. This chain is GTPase Obg, found in Rhodopseudomonas palustris (strain TIE-1).